A 38-amino-acid chain; its full sequence is MLMACYSAGQLGCLVFCNEAEYSYGKCIGRGRCCCYDL.

Disulfide bonds link C5–C27, C13–C33, and C17–C34.

It belongs to the DEFL family.

The sequence is that of Putative defensin-like protein 105 from Arabidopsis thaliana (Mouse-ear cress).